We begin with the raw amino-acid sequence, 276 residues long: Large ribosomal subunit protein uL2 (276 aa).

Disordered stretches follow at residues 33–55 (LVEAQGRSGGRNNNGRITSRHIG) and 221–276 (RGTA…AKKK).

This sequence belongs to the universal ribosomal protein uL2 family. In terms of assembly, part of the 50S ribosomal subunit. Forms a bridge to the 30S subunit in the 70S ribosome.

Functionally, one of the primary rRNA binding proteins. Required for association of the 30S and 50S subunits to form the 70S ribosome, for tRNA binding and peptide bond formation. It has been suggested to have peptidyltransferase activity; this is somewhat controversial. Makes several contacts with the 16S rRNA in the 70S ribosome. The sequence is that of Large ribosomal subunit protein uL2 from Psychrobacter sp. (strain PRwf-1).